Reading from the N-terminus, the 288-residue chain is Pantothenate synthetase (288 aa).

30–37 (MGFLHEGH) provides a ligand contact to ATP. H37 serves as the catalytic Proton donor. Q61 is a (R)-pantoate binding site. Residue Q61 coordinates beta-alanine. 147–150 (GLKD) contributes to the ATP binding site. Q153 contributes to the (R)-pantoate binding site. ATP-binding positions include V176 and 184 to 187 (KSSR).

The protein belongs to the pantothenate synthetase family. As to quaternary structure, homodimer.

It localises to the cytoplasm. The enzyme catalyses (R)-pantoate + beta-alanine + ATP = (R)-pantothenate + AMP + diphosphate + H(+). The protein operates within cofactor biosynthesis; (R)-pantothenate biosynthesis; (R)-pantothenate from (R)-pantoate and beta-alanine: step 1/1. Catalyzes the condensation of pantoate with beta-alanine in an ATP-dependent reaction via a pantoyl-adenylate intermediate. This is Pantothenate synthetase from Bacillus pumilus (strain SAFR-032).